The sequence spans 344 residues: tRNA (guanine(26)-N(2))-dimethyltransferase (344 aa).

Residues 1–334 (MIVREGSAEI…ASCDLVESLM (334 aa)) form the Trm1 methyltransferase domain. 3 residues coordinate S-adenosyl-L-methionine: Arg35, Arg60, and Glu76.

It belongs to the class I-like SAM-binding methyltransferase superfamily. Trm1 family.

The catalysed reaction is guanosine(26) in tRNA + 2 S-adenosyl-L-methionine = N(2)-dimethylguanosine(26) in tRNA + 2 S-adenosyl-L-homocysteine + 2 H(+). In terms of biological role, dimethylates a single guanine residue at position 26 of a number of tRNAs using S-adenosyl-L-methionine as donor of the methyl groups. This chain is tRNA (guanine(26)-N(2))-dimethyltransferase, found in Thermoplasma acidophilum (strain ATCC 25905 / DSM 1728 / JCM 9062 / NBRC 15155 / AMRC-C165).